A 227-amino-acid polypeptide reads, in one-letter code: Small ribosomal subunit protein uS3 (227 aa).

Positions 39-107 (VRQLLQKRLK…PVHITIEEVR (69 aa)) constitute a KH type-2 domain.

Belongs to the universal ribosomal protein uS3 family. In terms of assembly, part of the 30S ribosomal subunit. Forms a tight complex with proteins S10 and S14.

Functionally, binds the lower part of the 30S subunit head. Binds mRNA in the 70S ribosome, positioning it for translation. This is Small ribosomal subunit protein uS3 from Coxiella burnetii (strain CbuK_Q154) (Coxiella burnetii (strain Q154)).